The primary structure comprises 190 residues: HTH-type transcriptional repressor AcnR (190 aa).

Residues 10-70 enclose the HTH tetR-type domain; the sequence is SMRRQEILEG…ALAREDAARM (61 aa). The H-T-H motif DNA-binding region spans 33–52; the sequence is TVRRLEETVGKSRGAIFHHF. Residues 79-80, Arg-130, and Asn-134 each bind citrate; that span reads LV. Residue Glu-181 coordinates Mg(2+). A citrate-binding site is contributed by Arg-185.

In terms of assembly, homodimer.

AcnR negatively controls the expression of the aconitase gene acn. The sequence is that of HTH-type transcriptional repressor AcnR from Corynebacterium diphtheriae (strain ATCC 700971 / NCTC 13129 / Biotype gravis).